The chain runs to 281 residues: Probable endonuclease 4 (281 aa).

The Zn(2+) site is built by H78, H118, E149, D181, H184, H216, D229, H231, and E260.

The protein belongs to the AP endonuclease 2 family. The cofactor is Zn(2+).

The enzyme catalyses Endonucleolytic cleavage to 5'-phosphooligonucleotide end-products.. Functionally, endonuclease IV plays a role in DNA repair. It cleaves phosphodiester bonds at apurinic or apyrimidinic (AP) sites, generating a 3'-hydroxyl group and a 5'-terminal sugar phosphate. The protein is Probable endonuclease 4 of Thermoplasma acidophilum (strain ATCC 25905 / DSM 1728 / JCM 9062 / NBRC 15155 / AMRC-C165).